We begin with the raw amino-acid sequence, 507 residues long: ATP synthase subunit alpha, plastid (507 aa).

170 to 177 lines the ATP pocket; the sequence is GDRQTGKT.

It belongs to the ATPase alpha/beta chains family. F-type ATPases have 2 components, CF(1) - the catalytic core - and CF(0) - the membrane proton channel. CF(1) has five subunits: alpha(3), beta(3), gamma(1), delta(1), epsilon(1). CF(0) has four main subunits: a, b, b' and c.

It localises to the plastid membrane. The catalysed reaction is ATP + H2O + 4 H(+)(in) = ADP + phosphate + 5 H(+)(out). Produces ATP from ADP in the presence of a proton gradient across the membrane. The alpha chain is a regulatory subunit. The chain is ATP synthase subunit alpha, plastid from Cuscuta obtusiflora (Peruvian dodder).